Here is a 797-residue protein sequence, read N- to C-terminus: MKLNQFARLTPDFKVQVAELKQIGLQADPDDTFSQSTTDLFNAFFPEAYTLAAKKDKLAQVAVNMDQTLAAWLAKKPSKMTRRDFYNVALQLLGFEAFTDFDLNDPFKMMTATKLPSLDHDLTSTADLLKAVYLLLNTRTKHLVSYLDDLANRGFLKDFQKKQKKPTHLLFNGKVQQVFDARQAVREVVWIESDMDTDHDGQRDLLEATIYRPKATDQGLKVPVLFTANPYFHGTNDVTAVTHVPETTLAVKTHGASKAEVTANPEEPANLPHHPVNGEATQAEAYAEENGMYAFNDYFLARGFAVVYSAGVGTRYSDGFRTTGGPEETDGAVAVIEWLTGKRRAFTNRTDGITIKAWWSTGLVAMTGKSYLATLAMAAATTGVDGLKTIVADAGISSWYDYYRENGLVVAPGGFQGEDADVLAVDTFSRQKSGGDLINIKQAWEKHLATITHDQDRTTGAYNTWWDARNYRKNANKVKADVVLIHGLNDWNVKPTNAIKFWEAIADLPIQKKLVLHQGQHVYVHNVRSLDFLDMMNLWLTHELLGEANGAEDVLPNVVVQDNVAVQTWSAYQNFASPAAEHVTNTRNLKTDFEAATDQFTDHATATFDAQHDTSASFETAIITPNSAYANSRLWLTQPPLERDQTLEGIPHLELTLAIDAPTGILSVRLIDLGMAKRFGETAATVALNGLQLGFDYKTTDILEFKPTAKPTPSKLISLGHINLQNPKNAYEVQRITPGQPFHISLDLQPTHYHLPAGRQLALVIHGADMAQTIRPIKTTHYQIDLANSSITLPYRI.

Residues serine 370, aspartate 490, and histidine 521 each act as charge relay system in the active site.

The protein belongs to the peptidase S15 family. As to quaternary structure, homodimer.

The protein localises to the cytoplasm. It catalyses the reaction Hydrolyzes Xaa-Pro-|- bonds to release unblocked, N-terminal dipeptides from substrates including Ala-Pro-|-p-nitroanilide and (sequentially) Tyr-Pro-|-Phe-Pro-|-Gly-Pro-|-Ile.. Functionally, removes N-terminal dipeptides sequentially from polypeptides having unsubstituted N-termini provided that the penultimate residue is proline. In Lacticaseibacillus paracasei (strain ATCC 334 / BCRC 17002 / CCUG 31169 / CIP 107868 / KCTC 3260 / NRRL B-441) (Lactobacillus paracasei), this protein is Xaa-Pro dipeptidyl-peptidase.